The sequence spans 198 residues: ATP-dependent Clp protease proteolytic subunit (198 aa).

Ser98 (nucleophile) is an active-site residue. Residue His123 is part of the active site.

It belongs to the peptidase S14 family. As to quaternary structure, fourteen ClpP subunits assemble into 2 heptameric rings which stack back to back to give a disk-like structure with a central cavity, resembling the structure of eukaryotic proteasomes.

The protein resides in the cytoplasm. The catalysed reaction is Hydrolysis of proteins to small peptides in the presence of ATP and magnesium. alpha-casein is the usual test substrate. In the absence of ATP, only oligopeptides shorter than five residues are hydrolyzed (such as succinyl-Leu-Tyr-|-NHMec, and Leu-Tyr-Leu-|-Tyr-Trp, in which cleavage of the -Tyr-|-Leu- and -Tyr-|-Trp bonds also occurs).. Functionally, cleaves peptides in various proteins in a process that requires ATP hydrolysis. Has a chymotrypsin-like activity. Plays a major role in the degradation of misfolded proteins. The protein is ATP-dependent Clp protease proteolytic subunit of Ehrlichia ruminantium (strain Welgevonden).